We begin with the raw amino-acid sequence, 716 residues long: Phospholipid phosphatase-related protein type 3 (716 aa).

3 helical membrane-spanning segments follow: residues 18 to 38 (LPCFYFVELPIVASSVVSLYF), 70 to 90 (LIPLLMLLSLAFAAPAASIMV), and 131 to 151 (FVGVHVFGLCATALVTDVIQL). A glycan (N-linked (GlcNAc...) asparagine) is linked at Asn167. The next 3 membrane-spanning stretches (helical) occupy residues 205-225 (HATLSAFAAVYVSMYFNSVIS), 231-251 (LKPILVFAFAIAAGVCGLTQI), and 261-281 (VYAGFLIGAGIAAYLACHAVG). A disordered region spans residues 311-334 (SMYQQNKSVSTDELGPPGRLEGVP). Residues 312-321 (MYQQNKSVST) are compositionally biased toward polar residues. N-linked (GlcNAc...) asparagine glycosylation is present at Asn316. 2 positions are modified to phosphoserine: Ser320 and Ser351. Thr374 carries the phosphothreonine modification. Positions 416 to 488 (GRGLGLPDEA…RVILPPRPGP (73 aa)) are disordered. Ser426 is modified (phosphoserine). The span at 437–460 (VAEEEEEEEEEEEEEEEEEEEEEG) shows a compositional bias: acidic residues. Ser506 carries the phosphoserine modification. Residues 548–589 (AMSKAAGGPKAETASSSSASSDSSQYRSPSDRDSASIVTIDA) are disordered. Low complexity predominate over residues 562–575 (SSSSASSDSSQYRS). Residue Ser641 is modified to Phosphoserine. The segment at 664–694 (GEGLPPPGASEGALGAGSRESTLRRQVGALG) is disordered.

It belongs to the PA-phosphatase related phosphoesterase family.

Its subcellular location is the membrane. This is Phospholipid phosphatase-related protein type 3 from Rattus norvegicus (Rat).